We begin with the raw amino-acid sequence, 549 residues long: Cytoplasmic trehalase (549 aa).

Residues arginine 168, 175-176 (WD), asparagine 212, 221-223 (RSQ), 292-294 (RDE), and glycine 324 each bind substrate. Residues aspartate 326 and glutamate 509 each act as proton donor/acceptor in the active site. Glutamate 525 serves as a coordination point for substrate.

Belongs to the glycosyl hydrolase 37 family. In terms of assembly, monomer.

Its subcellular location is the cytoplasm. It carries out the reaction alpha,alpha-trehalose + H2O = alpha-D-glucose + beta-D-glucose. It functions in the pathway glycan degradation; trehalose degradation; D-glucose from alpha,alpha-trehalose: step 1/1. Functionally, hydrolyzes trehalose to glucose. Could be involved, in cells returning to low osmolarity conditions, in the utilization of the accumulated cytoplasmic trehalose, which was synthesized in response to high osmolarity. The chain is Cytoplasmic trehalase from Shigella flexneri serotype 5b (strain 8401).